The primary structure comprises 215 residues: MKTEVKICGLKTAEALQRAVALGASHTGFIFFPKSPRNIEPDDAGRLAELARGRAKIVAVTVDADNDDLDEIVSALHPEVLQLHGSENPERVLAIKALYGLPVIKALPIREASDLERIAPYIGIADRFLLDAKPPAGSDLPGGNGVSFDWRLLDALDANVDYMLSGGLNASNVEDALALTGARAIDTSSGVESAPGIKDLTLMDAFFEAIRRAEA.

The protein belongs to the TrpF family.

It carries out the reaction N-(5-phospho-beta-D-ribosyl)anthranilate = 1-(2-carboxyphenylamino)-1-deoxy-D-ribulose 5-phosphate. It participates in amino-acid biosynthesis; L-tryptophan biosynthesis; L-tryptophan from chorismate: step 3/5. This chain is N-(5'-phosphoribosyl)anthranilate isomerase, found in Sinorhizobium medicae (strain WSM419) (Ensifer medicae).